Here is an 899-residue protein sequence, read N- to C-terminus: Bifunctional uridylyltransferase/uridylyl-removing enzyme (899 aa).

The interval 1-342 (MPQMDPELFD…RAGESGPATP (342 aa)) is uridylyltransferase. The uridylyl-removing stretch occupies residues 343 to 705 (LNSRFQVRDG…TTQREFEGGT (363 aa)). Residues 461–583 (VDAHTLNLIK…VGDQTHLDYL (123 aa)) form the HD domain. ACT domains are found at residues 706–784 (QIFI…DEYP) and 816–897 (ILEL…SLQI).

This sequence belongs to the GlnD family. Mg(2+) is required as a cofactor.

It catalyses the reaction [protein-PII]-L-tyrosine + UTP = [protein-PII]-uridylyl-L-tyrosine + diphosphate. The catalysed reaction is [protein-PII]-uridylyl-L-tyrosine + H2O = [protein-PII]-L-tyrosine + UMP + H(+). Uridylyltransferase (UTase) activity is inhibited by glutamine, while glutamine activates uridylyl-removing (UR) activity. Functionally, modifies, by uridylylation and deuridylylation, the PII regulatory proteins (GlnB and homologs), in response to the nitrogen status of the cell that GlnD senses through the glutamine level. Under low glutamine levels, catalyzes the conversion of the PII proteins and UTP to PII-UMP and PPi, while under higher glutamine levels, GlnD hydrolyzes PII-UMP to PII and UMP (deuridylylation). Thus, controls uridylylation state and activity of the PII proteins, and plays an important role in the regulation of nitrogen assimilation and metabolism. The polypeptide is Bifunctional uridylyltransferase/uridylyl-removing enzyme (Ectopseudomonas mendocina (strain ymp) (Pseudomonas mendocina)).